The primary structure comprises 307 residues: Serine/threonine-protein phosphatase PP2A-2 catalytic subunit (307 aa).

Mn(2+)-binding residues include Asp55, His57, Asp83, and Asn115. Residue His116 is the Proton donor of the active site. Mn(2+)-binding residues include His165 and His239.

Belongs to the PPP phosphatase family. PP-2A subfamily. Mn(2+) is required as a cofactor.

The protein resides in the cytoplasm. It carries out the reaction O-phospho-L-seryl-[protein] + H2O = L-seryl-[protein] + phosphate. The enzyme catalyses O-phospho-L-threonyl-[protein] + H2O = L-threonyl-[protein] + phosphate. The protein is Serine/threonine-protein phosphatase PP2A-2 catalytic subunit (PP2A2) of Oryza sativa subsp. indica (Rice).